The primary structure comprises 423 residues: Protein CLP1 homolog (423 aa).

Residues E16, K57, and 119–124 (DVGKST) contribute to the ATP site.

The protein belongs to the Clp1 family. Clp1 subfamily.

It is found in the nucleus. In terms of biological role, required for endonucleolytic cleavage during polyadenylation-dependent pre-mRNA 3'-end formation. In Drosophila sechellia (Fruit fly), this protein is Protein CLP1 homolog (cbc).